Here is an 883-residue protein sequence, read N- to C-terminus: MSPSFSGAAIRQAFLDFYAQRGHQVLPSASLVPEDPTVLLTIAGMLPFKPIFLGHQDPQYPRVTTAQKCVRTNDIENVGRTARHHTFFEMLGNFSFGDYFKKEAITWAWELVTEVFGLPPERLVVSVFREDEEAFALWRDAIGIPPHRIRRMGEEDNFWAAGPTGPCGPCSEIYYDFKPELGDEQIDLGDDSRFLEIYNLVFMELNRDSEGRLTPLARQNIDTGLGLERLAQVLQGVPNNYETDLIFPIVQKAAEIARVDYFQASPEQKVSLKVIGDHARAVMHLIADGVIPSNVDRGYVLRRLIRRMVRHGRLLGIGEPFTLPVVETAIQLAEAAYPEVREREAVIKAELQREEEQFLKTLERGERLLFDLFANVTASGAPKQISGADAFKLFDTYGFPLELTQEIAQERGFSVDVQGFEQEMEKQRQRARAAHQTLDVTAQGSLDELAEFLIETEFLGYSQSSARGVVEALLVEGKSVPQVEAGQSVQVVLDRTPFYAESGGQIGDRGYLAGDGVLVRVEDVQKRGDLFVHFGWVERGILRVGDPVQAQIDLACRRRAQAHHTATHLLQAALKKVVDPSISQAGSLVAFDRLRFDFTLSRPLTPEELQQVEDLVNTWIAEAHPAQVSIMPLAEAKARGAIAMFGEKYGAEVRVVDFPGVSMELCGGTHVSNTAEIGLFKIISESGVAAGIRRIEAVAGPAVLEYLNERDSVVRELSAQFKAKPQEIPERVAALQAELKAAQRALEEARSQLALLQAERLLPQAVAVGNLQILAAELGSTPPEALKTAAEHLLHKLGEGAVVLGSVPEAGKVSLVAAFSPAVQKLGLKAGSFIGEIAKLTGGGGGGRPNLAQAGGKQPEKLAQALQVAQERLQAELSSGLGS.

The Zn(2+) site is built by His564, His568, Cys666, and His670.

The protein belongs to the class-II aminoacyl-tRNA synthetase family. Zn(2+) is required as a cofactor.

It is found in the cytoplasm. It carries out the reaction tRNA(Ala) + L-alanine + ATP = L-alanyl-tRNA(Ala) + AMP + diphosphate. Its function is as follows. Catalyzes the attachment of alanine to tRNA(Ala) in a two-step reaction: alanine is first activated by ATP to form Ala-AMP and then transferred to the acceptor end of tRNA(Ala). Also edits incorrectly charged Ser-tRNA(Ala) and Gly-tRNA(Ala) via its editing domain. This Synechococcus sp. (strain JA-3-3Ab) (Cyanobacteria bacterium Yellowstone A-Prime) protein is Alanine--tRNA ligase.